Reading from the N-terminus, the 129-residue chain is MPTYNQLVRFGRKSKTRKTKSPALESNPFKSGVCLVVKTVTPKKPNSALRKIATVRLSNKRTVNAYIPGEKHSVKEHDRVLVRGGQVPDLPGVKYHIVLGAYDIAGVKGRKQGRSRYGTPRKQVAVTKK.

The segment at 1 to 25 (MPTYNQLVRFGRKSKTRKTKSPALE) is disordered. Positions 10–20 (FGRKSKTRKTK) are enriched in basic residues. Aspartate 89 is subject to 3-methylthioaspartic acid. The segment at 109–129 (GRKQGRSRYGTPRKQVAVTKK) is disordered.

Belongs to the universal ribosomal protein uS12 family. In terms of assembly, part of the 30S ribosomal subunit. Contacts proteins S8 and S17. May interact with IF1 in the 30S initiation complex.

With S4 and S5 plays an important role in translational accuracy. Its function is as follows. Interacts with and stabilizes bases of the 16S rRNA that are involved in tRNA selection in the A site and with the mRNA backbone. Located at the interface of the 30S and 50S subunits, it traverses the body of the 30S subunit contacting proteins on the other side and probably holding the rRNA structure together. The combined cluster of proteins S8, S12 and S17 appears to hold together the shoulder and platform of the 30S subunit. This is Small ribosomal subunit protein uS12 from Rickettsia peacockii (strain Rustic).